The chain runs to 255 residues: Type III pantothenate kinase (255 aa).

6 to 13 (DVGNTNIV) contributes to the ATP binding site. Substrate-binding positions include tyrosine 100 and 107–110 (GADR). The active-site Proton acceptor is aspartate 109. Aspartate 129 contributes to the K(+) binding site. Threonine 132 contacts ATP. Threonine 184 serves as a coordination point for substrate.

It belongs to the type III pantothenate kinase family. In terms of assembly, homodimer. NH4(+) serves as cofactor. Requires K(+) as cofactor.

The protein localises to the cytoplasm. It carries out the reaction (R)-pantothenate + ATP = (R)-4'-phosphopantothenate + ADP + H(+). Its pathway is cofactor biosynthesis; coenzyme A biosynthesis; CoA from (R)-pantothenate: step 1/5. In terms of biological role, catalyzes the phosphorylation of pantothenate (Pan), the first step in CoA biosynthesis. The chain is Type III pantothenate kinase from Thermoanaerobacter sp. (strain X514).